Here is a 275-residue protein sequence, read N- to C-terminus: Dermonecrotic toxin SpaSicTox-betaIIA3 (275 aa).

Residue H5 is part of the active site. 2 residues coordinate Mg(2+): E25 and D27. H41 acts as the Nucleophile in catalysis. Intrachain disulfides connect C45/C51 and C47/C190. D85 contacts Mg(2+).

It belongs to the arthropod phospholipase D family. Class II subfamily. Requires Mg(2+) as cofactor. As to expression, expressed by the venom gland.

The protein resides in the secreted. It catalyses the reaction an N-(acyl)-sphingosylphosphocholine = an N-(acyl)-sphingosyl-1,3-cyclic phosphate + choline. The enzyme catalyses an N-(acyl)-sphingosylphosphoethanolamine = an N-(acyl)-sphingosyl-1,3-cyclic phosphate + ethanolamine. It carries out the reaction a 1-acyl-sn-glycero-3-phosphocholine = a 1-acyl-sn-glycero-2,3-cyclic phosphate + choline. The catalysed reaction is a 1-acyl-sn-glycero-3-phosphoethanolamine = a 1-acyl-sn-glycero-2,3-cyclic phosphate + ethanolamine. In terms of biological role, dermonecrotic toxins cleave the phosphodiester linkage between the phosphate and headgroup of certain phospholipids (sphingolipid and lysolipid substrates), forming an alcohol (often choline) and a cyclic phosphate. This toxin acts on sphingomyelin (SM). It may also act on ceramide phosphoethanolamine (CPE), lysophosphatidylcholine (LPC) and lysophosphatidylethanolamine (LPE), but not on lysophosphatidylserine (LPS), and lysophosphatidylglycerol (LPG). It acts by transphosphatidylation, releasing exclusively cyclic phosphate products as second products. Induces dermonecrosis, hemolysis, increased vascular permeability, edema, inflammatory response, and platelet aggregation. This chain is Dermonecrotic toxin SpaSicTox-betaIIA3, found in Sicarius patagonicus (Six-eyed sand spider).